The following is a 132-amino-acid chain: Evasin P985 (132 aa).

The first 24 residues, 1–24 (MHSTIAYVSLLPLALFVAMHGAST), serve as a signal peptide directing secretion. N-linked (GlcNAc...) asparagine glycosylation is found at asparagine 45, asparagine 69, asparagine 74, asparagine 103, asparagine 111, and asparagine 117. Disulfide bonds link cysteine 48–cysteine 70, cysteine 66–cysteine 109, cysteine 83–cysteine 114, and cysteine 104–cysteine 123.

Its subcellular location is the secreted. In terms of biological role, salivary chemokine-binding protein which binds to host chemokine CCL5. The sequence is that of Evasin P985 from Amblyomma parvum (South American tick).